The primary structure comprises 1075 residues: Paired amphipathic helix protein pst2 (1075 aa).

PAH domains follow at residues 28 to 102 (SPNG…LPSS), 138 to 208 (LPCT…LPSS), and 243 to 319 (RPDN…TSLS). Serine 641 and serine 643 each carry phosphoserine. The disordered stretch occupies residues 647–700 (LTEFVKQPKINGQRESRSAAAARKKEESGNKSQSNSQNSLSDESGNVTPVSKKQ). The span at 658 to 675 (GQRESRSAAAARKKEESG) shows a compositional bias: basic and acidic residues. The span at 676-691 (NKSQSNSQNSLSDESG) shows a compositional bias: low complexity.

As to quaternary structure, heterotetramer of alp13, clr6, prw1 and pst2.

It localises to the nucleus. Functionally, has a role in chromatin assembly and chromosome segregation. Involved in the deacetylation of histones. This chain is Paired amphipathic helix protein pst2 (pst2), found in Schizosaccharomyces pombe (strain 972 / ATCC 24843) (Fission yeast).